We begin with the raw amino-acid sequence, 456 residues long: Gamma-aminobutyric acid receptor subunit alpha-1 (456 aa).

The first 27 residues, 1-27 (MRKSPGLSDCLWAWILLLSTLTGRSYG), serve as a signal peptide directing secretion. The Extracellular portion of the chain corresponds to 28–253 (QPSLQDELKD…FHLKRKIGYF (226 aa)). N38 carries N-linked (GlcNAc...) asparagine glycosylation. 4-aminobutanoate is bound at residue R94. N-linked (GlcNAc...) asparagine glycosylation occurs at N138. T157 contributes to the 4-aminobutanoate binding site. An intrachain disulfide couples C166 to C180. The chain crosses the membrane as a helical span at residues 254–274 (VIQTYLPCIMTVILSQVSFWL). Residues 275–279 (NRESV) are Cytoplasmic-facing. Residues 280-301 (PARTVFGVTTVLTMTTLSISAR) traverse the membrane as a helical segment. Residues 302–311 (NSLPKVAYAT) lie on the Extracellular side of the membrane. A helical transmembrane segment spans residues 312 to 333 (AMDWFIAVCYAFVFSALIEFAT). The Cytoplasmic portion of the chain corresponds to 334–421 (VNYFTKRGYA…TFNSVSKIDR (88 aa)). Residues 422-441 (LSRIAFPLLFGIFNLIYWAT) traverse the membrane as a helical segment. Residues 442-456 (YLNREPQLKAPTPHQ) are Extracellular-facing.

Belongs to the ligand-gated ion channel (TC 1.A.9) family. Gamma-aminobutyric acid receptor (TC 1.A.9.5) subfamily. GABRA1 sub-subfamily. Heteropentamer, formed by a combination of alpha (GABRA1-6), beta (GABRB1-3), gamma (GABRG1-3), delta (GABRD), epsilon (GABRE), rho (GABRR1-3), pi (GABRP) and theta (GABRQ) subunits, each subunit exhibiting distinct physiological and pharmacological properties. Interacts with UBQLN1. Interacts with TRAK1. Interacts with KIF21B. Identified in a complex of 720 kDa composed of LHFPL4, NLGN2, GABRA1, GABRB2, GABRG2 and GABRB3. Interacts with LHFPL4. Interacts with NLGN2. Interacts with SHISA7; interaction leads to the regulation of GABA(A) receptor trafficking, channel deactivation kinetics and pharmacology.

It localises to the postsynaptic cell membrane. The protein localises to the cell membrane. It is found in the cytoplasmic vesicle membrane. It catalyses the reaction chloride(in) = chloride(out). Its activity is regulated as follows. Allosterically activated by benzodiazepines, the neuroanesthetic alphaxalone and pentobarbital. Inhibited by the antagonist bicuculline. Potentiated by histamine. Its function is as follows. Alpha subunit of the heteropentameric ligand-gated chloride channel gated by gamma-aminobutyric acid (GABA), a major inhibitory neurotransmitter in the brain. GABA-gated chloride channels, also named GABA(A) receptors (GABAAR), consist of five subunits arranged around a central pore and contain GABA active binding site(s) located at the alpha and beta subunit interface(s). When activated by GABA, GABAARs selectively allow the flow of chloride anions across the cell membrane down their electrochemical gradient. Alpha-1/GABRA1-containing GABAARs are largely synaptic. Chloride influx into the postsynaptic neuron following GABAAR opening decreases the neuron ability to generate a new action potential, thereby reducing nerve transmission. GABAARs containing alpha-1 and beta-2 or -3 subunits exhibit synaptogenic activity; the gamma-2 subunit being necessary but not sufficient to induce rapid synaptic contacts formation. GABAARs function also as histamine receptor where histamine binds at the interface of two neighboring beta subunits and potentiates GABA response. GABAARs containing alpha, beta and epsilon subunits also permit spontaneous chloride channel activity while preserving the structural information required for GABA-gated openings. Alpha-1-mediated plasticity in the orbitofrontal cortex regulates context-dependent action selection. Together with rho subunits, may also control neuronal and glial GABAergic transmission in the cerebellum. In Pongo abelii (Sumatran orangutan), this protein is Gamma-aminobutyric acid receptor subunit alpha-1 (GABRA1).